The primary structure comprises 843 residues: DNA gyrase subunit A (843 aa).

The Topo IIA-type catalytic domain occupies 61–528; the sequence is LPDVRDGLKP…ESSTFNAEDL (468 aa). Tyr149 acts as the O-(5'-phospho-DNA)-tyrosine intermediate in catalysis. A GyrA-box motif is present at residues 555–561; sequence QKRGGKG.

The protein belongs to the type II topoisomerase GyrA/ParC subunit family. As to quaternary structure, heterotetramer, composed of two GyrA and two GyrB chains. In the heterotetramer, GyrA contains the active site tyrosine that forms a transient covalent intermediate with DNA, while GyrB binds cofactors and catalyzes ATP hydrolysis.

Its subcellular location is the cytoplasm. The enzyme catalyses ATP-dependent breakage, passage and rejoining of double-stranded DNA.. A type II topoisomerase that negatively supercoils closed circular double-stranded (ds) DNA in an ATP-dependent manner to modulate DNA topology and maintain chromosomes in an underwound state. Negative supercoiling favors strand separation, and DNA replication, transcription, recombination and repair, all of which involve strand separation. Also able to catalyze the interconversion of other topological isomers of dsDNA rings, including catenanes and knotted rings. Type II topoisomerases break and join 2 DNA strands simultaneously in an ATP-dependent manner. This chain is DNA gyrase subunit A, found in Leptospira biflexa serovar Patoc (strain Patoc 1 / Ames).